The sequence spans 156 residues: 6,7-dimethyl-8-ribityllumazine synthase (156 aa).

5-amino-6-(D-ribitylamino)uracil contacts are provided by residues tryptophan 22, 56–58, and 80–82; these read AYE and AVI. (2S)-2-hydroxy-3-oxobutyl phosphate is bound at residue 85–86; sequence DT. The active-site Proton donor is histidine 88. 5-amino-6-(D-ribitylamino)uracil is bound at residue phenylalanine 113. Arginine 127 contacts (2S)-2-hydroxy-3-oxobutyl phosphate.

Belongs to the DMRL synthase family.

It catalyses the reaction (2S)-2-hydroxy-3-oxobutyl phosphate + 5-amino-6-(D-ribitylamino)uracil = 6,7-dimethyl-8-(1-D-ribityl)lumazine + phosphate + 2 H2O + H(+). It participates in cofactor biosynthesis; riboflavin biosynthesis; riboflavin from 2-hydroxy-3-oxobutyl phosphate and 5-amino-6-(D-ribitylamino)uracil: step 1/2. Functionally, catalyzes the formation of 6,7-dimethyl-8-ribityllumazine by condensation of 5-amino-6-(D-ribitylamino)uracil with 3,4-dihydroxy-2-butanone 4-phosphate. This is the penultimate step in the biosynthesis of riboflavin. The polypeptide is 6,7-dimethyl-8-ribityllumazine synthase (Deinococcus deserti (strain DSM 17065 / CIP 109153 / LMG 22923 / VCD115)).